The primary structure comprises 347 residues: Phenylalanine--tRNA ligase alpha subunit (347 aa).

Residues 83–111 (QNLSGGDDSGADPTFDPTLPGTRPSLGHI) form a disordered region. Residue glutamate 274 participates in Mg(2+) binding.

It belongs to the class-II aminoacyl-tRNA synthetase family. Phe-tRNA synthetase alpha subunit type 1 subfamily. Tetramer of two alpha and two beta subunits. The cofactor is Mg(2+).

It is found in the cytoplasm. The enzyme catalyses tRNA(Phe) + L-phenylalanine + ATP = L-phenylalanyl-tRNA(Phe) + AMP + diphosphate + H(+). This Rhodopirellula baltica (strain DSM 10527 / NCIMB 13988 / SH1) protein is Phenylalanine--tRNA ligase alpha subunit.